The sequence spans 371 residues: MPHHYILTLFGLLPVATNISTWWNFGSMLLTCLALQVLTGFFLAVHYTANINLAFSSIIHITRDVPFGWMMQNLHAIGASMFFICIYIHIARGLYYGSYLNKETWMSGITLLITLMATAFFGYVLPWGQMSFWAATVITNLLTAVPYLGTSLTTWLWGGFAINDPTLTRFFALHFILPFAIISLSSLHIILLHEEGSSNPLGTNPDIDKIPFHPYHSHKDLLLLTLMMLSLLIIVSFFPDIFNDPDNFSKANPLVTPQHIKPEWYFLFAYGILRSIPNKLGGALALVMSIMILFTIPFTHTAHLRPMTFRPFSQLMFWTLVSTFITITWAATKPVEPPFIVISQVTSTLYFTFFLLIPILGWTENKMMNTL.

The next 4 membrane-spanning stretches (helical) occupy residues 25–45 (FGSMLLTCLALQVLTGFFLAV), 69–90 (WMMQNLHAIGASMFFICIYIHI), 105–125 (WMSGITLLITLMATAFFGYVL), and 170–190 (FFALHFILPFAIISLSSLHII). Heme b-binding residues include His-75 and His-89. Heme b contacts are provided by His-174 and His-188. Residue His-193 participates in a ubiquinone binding. The next 4 helical transmembrane spans lie at 218–238 (HKDLLLLTLMMLSLLIIVSFF), 280–300 (LGGALALVMSIMILFTIPFTH), 312–332 (FSQLMFWTLVSTFITITWAAT), and 339–358 (FIVISQVTSTLYFTFFLLIP).

It belongs to the cytochrome b family. As to quaternary structure, the cytochrome bc1 complex contains 3 respiratory subunits (MT-CYB, CYC1 and UQCRFS1), 2 core proteins (UQCRC1 and UQCRC2) and probably 6 low-molecular weight proteins. Heme b is required as a cofactor.

It is found in the mitochondrion inner membrane. Functionally, component of the ubiquinol-cytochrome c reductase complex (complex III or cytochrome b-c1 complex) that is part of the mitochondrial respiratory chain. The b-c1 complex mediates electron transfer from ubiquinol to cytochrome c. Contributes to the generation of a proton gradient across the mitochondrial membrane that is then used for ATP synthesis. The protein is Cytochrome b (MT-CYB) of Leiopython albertisii (Northern white-lipped python).